A 120-amino-acid polypeptide reads, in one-letter code: Small ribosomal subunit protein bS16 (120 aa).

The segment covering 84–110 (KREVKSNPEKAKPGKRAQERAAEKAQK) has biased composition (basic and acidic residues). The tract at residues 84–120 (KREVKSNPEKAKPGKRAQERAAEKAQKAADAAAATAE) is disordered. Positions 111–120 (AADAAAATAE) are enriched in low complexity.

It belongs to the bacterial ribosomal protein bS16 family.

This chain is Small ribosomal subunit protein bS16, found in Rhizobium rhizogenes (strain K84 / ATCC BAA-868) (Agrobacterium radiobacter).